Reading from the N-terminus, the 309-residue chain is D-galacturonate reductase (309 aa).

Y50 serves as the catalytic Proton donor. H109 lines the substrate pocket. 210–264 (SPLGSTGSPLMSADPVVKIAEKKGISPTTVLLSYHVNRGSTVLAKSVTPARIKAN) provides a ligand contact to NADP(+).

This sequence belongs to the aldo/keto reductase family.

The catalysed reaction is L-galactonate + NADP(+) = aldehydo-D-galacturonate + NADPH + H(+). The protein operates within carbohydrate acid metabolism. Mediates the reduction of D-galacturonate to L-galactonate, the first step in D-galacturonate catabolic process. Also has activity with D-glucuronate and DL-glyceraldehyde. No activity is observed with D-glucose, D-fructose, D-xylose, D-galactose, L-arabinose or D-mannose. Activity is seen only with NADPH and not with NADH. This Hypocrea jecorina (Trichoderma reesei) protein is D-galacturonate reductase (gar1).